The following is a 298-amino-acid chain: Inosose dehydratase 1 (298 aa).

Belongs to the IolE/MocC family. Requires glutathione as cofactor. It depends on Co(2+) as a cofactor. Mn(2+) serves as cofactor.

It carries out the reaction scyllo-inosose = 3D-3,5/4-trihydroxycyclohexane-1,2-dione + H2O. It participates in polyol metabolism; myo-inositol degradation into acetyl-CoA; acetyl-CoA from myo-inositol: step 2/7. Functionally, catalyzes the dehydration of inosose (2-keto-myo-inositol, 2KMI or 2,4,6/3,5-pentahydroxycyclohexanone) to 3D-(3,5/4)-trihydroxycyclohexane-1,2-dione (D-2,3-diketo-4-deoxy-epi-inositol). The chain is Inosose dehydratase 1 from Bacillus cereus (strain ZK / E33L).